A 67-amino-acid chain; its full sequence is Peptide Hp1036 (67 aa).

A signal peptide spans 1-23 (MKTQFAILLITLVLFQMFSQSDA). Phe-36 is subject to Phenylalanine amide. A propeptide spanning residues 40–67 (GLNDLSDLDELFDGEISEADVDFLREIM) is cleaved from the precursor.

It belongs to the non-disulfide-bridged peptide (NDBP) superfamily. Short antimicrobial peptide (group 4) family. Expressed by the venom gland.

Its subcellular location is the secreted. The protein localises to the target cell membrane. Its function is as follows. Amphipathic peptide with antibacterial activities. Shows antiviral activities against the herpes simplex virus type-1. It potently inhibits the initial infection by provoking the rupture of viral envelop and the dissociation of proteins from the virions (EC(50) is 0.43 uM). It also effectively inhibits viral attachment (EC(50) is 2.87 uM), viral entry (EC(50) is 4.29 uM) and viral proliferation after infection (EC(50) is 7.86). Morever, it enters mammalian tested cells (Vero) and reduces the intracellular infectivity. In Heterometrus petersii (Asian forest scorpion), this protein is Peptide Hp1036.